A 3799-amino-acid polypeptide reads, in one-letter code: Polyketide synthase GfsE (3799 aa).

The Ketosynthase family 3 (KS3) 1 domain maps to 33–459 (HEPIAIIGMS…GTNAHAILEE (427 aa)). 2 module regions span residues 33 to 1730 (HEPI…RSSA) and 1749 to 3494 (DEAI…RTDL). Catalysis depends on for beta-ketoacyl synthase 1 activity residues Cys-206, His-341, and His-381. Positions 462 to 496 (AATGNPTEADTDQEPAASASPDRTTTLPAVPWPLS) are disordered. The 314-residue stretch at 582 to 895 (FVFPGQGSQW…LGEAHAHGAD (314 aa)) folds into the Malonyl-CoA:ACP transacylase (MAT) 1 domain. Positions 944 to 1069 (HPLFGAVVEV…GVLELEARPE (126 aa)) are N-terminal hotdog fold 1. Residues 944 to 1222 (HPLFGAVVEV…SRPVAEEQLG (279 aa)) form the PKS/mFAS DH 1 domain. The active-site Proton acceptor; for dehydratase activity 1 is His-976. A C-terminal hotdog fold 1 region spans residues 1081 to 1222 (AEVVPVEGLY…SRPVAEEQLG (142 aa)). Catalysis depends on Asp-1142, which acts as the Proton donor; for dehydratase activity 1. A Ketoreductase (KR) 1 domain is found at 1382–1554 (LLVTGASGVL…TSLSWGLWAE (173 aa)). A Carrier 1 domain is found at 1652–1730 (EAERAVLELV…ALATHIRSSA (79 aa)). O-(pantetheine 4'-phosphoryl)serine is present on Ser-1690. The 426-residue stretch at 1749 to 2174 (DEAIAIVGMA…GTNAHVILEQ (426 aa)) folds into the Ketosynthase family 3 (KS3) 2 domain. Catalysis depends on for beta-ketoacyl synthase 2 activity residues Cys-1921, His-2056, and His-2096. Residues 2284 to 2604 (FVFPGQGSQW…VSLAKVHTHG (321 aa)) form the Malonyl-CoA:ACP transacylase (MAT) 2 domain. The N-terminal hotdog fold 2 stretch occupies residues 2656 to 2781 (HPLLTGVVDL…GTLAVDADHD (126 aa)). The PKS/mFAS DH 2 domain occupies 2656-2936 (HPLLTGVVDL…TRPVTAAQFA (281 aa)). His-2688 acts as the Proton acceptor; for dehydratase activity 2 in catalysis. The segment at 2794 to 2936 (ADPVDLTEVY…TRPVTAAQFA (143 aa)) is C-terminal hotdog fold 2. Catalysis depends on Asp-2855, which acts as the Proton donor; for dehydratase activity 2. In terms of domain architecture, Ketoreductase (KR) 2 spans 3142-3314 (LLVTGASGVL…TALSWGLWAE (173 aa)). A Carrier 2 domain is found at 3419–3494 (AALLDLVGAQ…ALAAQLRTDL (76 aa)). At Ser-3454 the chain carries O-(pantetheine 4'-phosphoryl)serine.

It depends on pantetheine 4'-phosphate as a cofactor.

It functions in the pathway antibiotic biosynthesis. Fifth protein in the synthesis of the 16-membered macrolide antibiotics FD-891 and FD-892. Composed of 2 modules. Modifies the product of GfsD by multiple rounds of addition of methylmalonyl-CoA and other modifications to help generate the final products. In Streptomyces halstedii, this protein is Polyketide synthase GfsE.